The sequence spans 491 residues: Protein nucleotidyltransferase YdiU (491 aa).

ATP contacts are provided by Gly-94, Gly-96, Arg-97, Lys-117, Asp-129, Gly-130, Arg-180, and Arg-187. Catalysis depends on Asp-256, which acts as the Proton acceptor. Mg(2+)-binding residues include Asn-257 and Asp-266. Position 266 (Asp-266) interacts with ATP.

It belongs to the SELO family. Requires Mg(2+) as cofactor. It depends on Mn(2+) as a cofactor.

The catalysed reaction is L-seryl-[protein] + ATP = 3-O-(5'-adenylyl)-L-seryl-[protein] + diphosphate. It catalyses the reaction L-threonyl-[protein] + ATP = 3-O-(5'-adenylyl)-L-threonyl-[protein] + diphosphate. It carries out the reaction L-tyrosyl-[protein] + ATP = O-(5'-adenylyl)-L-tyrosyl-[protein] + diphosphate. The enzyme catalyses L-histidyl-[protein] + UTP = N(tele)-(5'-uridylyl)-L-histidyl-[protein] + diphosphate. The catalysed reaction is L-seryl-[protein] + UTP = O-(5'-uridylyl)-L-seryl-[protein] + diphosphate. It catalyses the reaction L-tyrosyl-[protein] + UTP = O-(5'-uridylyl)-L-tyrosyl-[protein] + diphosphate. Its function is as follows. Nucleotidyltransferase involved in the post-translational modification of proteins. It can catalyze the addition of adenosine monophosphate (AMP) or uridine monophosphate (UMP) to a protein, resulting in modifications known as AMPylation and UMPylation. This chain is Protein nucleotidyltransferase YdiU, found in Clostridium botulinum (strain Loch Maree / Type A3).